The sequence spans 673 residues: UvrABC system protein B (673 aa).

The Helicase ATP-binding domain maps to 26–414 (EGLEDGLAHQ…GDEVVDQVVR (389 aa)). An ATP-binding site is contributed by 39–46 (GVTGSGKT). Residues 92–115 (YYDYYQPEAYVPSSDTFIEKDASI) carry the Beta-hairpin motif. The Helicase C-terminal domain maps to 431 to 597 (QVDDLLSEIR…GLNKKVVDIL (167 aa)). The 36-residue stretch at 633 to 668 (QQKIHELEGQMMQHAQNLEFEEAAQIRDQLHQLREL) folds into the UVR domain.

It belongs to the UvrB family. In terms of assembly, forms a heterotetramer with UvrA during the search for lesions. Interacts with UvrC in an incision complex.

It localises to the cytoplasm. The UvrABC repair system catalyzes the recognition and processing of DNA lesions. A damage recognition complex composed of 2 UvrA and 2 UvrB subunits scans DNA for abnormalities. Upon binding of the UvrA(2)B(2) complex to a putative damaged site, the DNA wraps around one UvrB monomer. DNA wrap is dependent on ATP binding by UvrB and probably causes local melting of the DNA helix, facilitating insertion of UvrB beta-hairpin between the DNA strands. Then UvrB probes one DNA strand for the presence of a lesion. If a lesion is found the UvrA subunits dissociate and the UvrB-DNA preincision complex is formed. This complex is subsequently bound by UvrC and the second UvrB is released. If no lesion is found, the DNA wraps around the other UvrB subunit that will check the other stand for damage. The chain is UvrABC system protein B from Salmonella paratyphi A (strain ATCC 9150 / SARB42).